The primary structure comprises 703 residues: UvrABC system protein B (703 aa).

The region spanning 33 to 190 (TRIENGENDV…RRFVAMQYKR (158 aa)) is the Helicase ATP-binding domain. Residue 46–53 (GATGTGKT) participates in ATP binding. Residues 99–122 (YYDYYQPEAYIPQTDTYIEKDSNI) carry the Beta-hairpin motif. Residues 436–589 (QIDDLLAEIK…QIAYNQEHGI (154 aa)) enclose the Helicase C-terminal domain. Positions 659–694 (ADLIRQLSEQMHTAAEQLQFELAARLRDEIRDLKKE) constitute a UVR domain.

Belongs to the UvrB family. In terms of assembly, forms a heterotetramer with UvrA during the search for lesions. Interacts with UvrC in an incision complex.

The protein localises to the cytoplasm. Functionally, the UvrABC repair system catalyzes the recognition and processing of DNA lesions. A damage recognition complex composed of 2 UvrA and 2 UvrB subunits scans DNA for abnormalities. Upon binding of the UvrA(2)B(2) complex to a putative damaged site, the DNA wraps around one UvrB monomer. DNA wrap is dependent on ATP binding by UvrB and probably causes local melting of the DNA helix, facilitating insertion of UvrB beta-hairpin between the DNA strands. Then UvrB probes one DNA strand for the presence of a lesion. If a lesion is found the UvrA subunits dissociate and the UvrB-DNA preincision complex is formed. This complex is subsequently bound by UvrC and the second UvrB is released. If no lesion is found, the DNA wraps around the other UvrB subunit that will check the other stand for damage. In Bifidobacterium longum subsp. infantis (strain ATCC 15697 / DSM 20088 / JCM 1222 / NCTC 11817 / S12), this protein is UvrABC system protein B.